The chain runs to 724 residues: Ribosomal RNA processing protein 1 homolog B (724 aa).

Positions 331-576 are disordered; that stretch reads NGAPLSSAED…SKKKKKTMKL (246 aa). Phosphoserine occurs at positions 336 and 370. A compositionally biased stretch (basic residues) spans 373–386; sequence HIHKKKRKKRKRSH. Phosphoserine is present on residues serine 432 and serine 438. Positions 448–461 are enriched in basic residues; that stretch reads HNKRKRPRKKKLRA. Residues 483-496 show a composition bias toward low complexity; sequence SGHSQSSAAHISSS. The residue at position 494 (serine 494) is a Phosphoserine. Composition is skewed to polar residues over residues 513–528 and 548–564; these read DSSS…TPTS and KTAS…SQKP. Lysine 618 is subject to N6-acetyllysine. The segment at 625-649 is disordered; that stretch reads AKNSSATRPQGPAGQLNKTPSSSKK. Residues 640-649 are compositionally biased toward polar residues; the sequence is LNKTPSSSKK. Serine 668 and serine 672 each carry phosphoserine. The residue at position 678 (arginine 678) is a Citrulline. The interval 687 to 724 is disordered; it reads PLHGVLKTATSSPASTPLSPMRLPATTPKRRPRAADFF. The residue at position 694 (threonine 694) is a Phosphothreonine. Positions 694 to 706 are enriched in low complexity; sequence TATSSPASTPLSP. Phosphoserine is present on residues serine 698 and serine 701.

The protein belongs to the RRP1 family. In terms of assembly, interacts with the transcriptional activator E2F1. Interacts with serine/threonine-protein phosphatase PP1 subunits PPP1CB and PPP1CC but not with PPP1CA. Interacts with 60S ribosomal proteins RPL5 and RPL27, ribosomal processing protein RRP1/NNP1 and other nucleolar proteins including NOP2/NOL1 and FBL. Also interacts with nucleolar protein NPM1/B23. Interacts with splicing factor SRSF1 and LUC7L3/CROP. Interacts with GTPase activator SIPA1. Interacts with H1-10, NCL, PARP1, TRIM28 and YBX3. Post-translationally, citrullinated by PADI4.

The protein resides in the nucleus. It localises to the nucleolus. It is found in the nucleoplasm. Its subcellular location is the chromosome. Its function is as follows. Positively regulates DNA damage-induced apoptosis by acting as a transcriptional coactivator of proapoptotic target genes of the transcriptional activator E2F1. Likely to play a role in ribosome biogenesis by targeting serine/threonine protein phosphatase PP1 to the nucleolus. Involved in regulation of mRNA splicing. Inhibits SIPA1 GTPase activity. Involved in regulating expression of extracellular matrix genes. Associates with chromatin and may play a role in modulating chromatin structure. In Mus musculus (Mouse), this protein is Ribosomal RNA processing protein 1 homolog B (Rrp1b).